We begin with the raw amino-acid sequence, 146 residues long: Large ribosomal subunit protein uL15 (146 aa).

Residues 1 to 13 (MKLHELKPAEGSR) show a composition bias toward basic and acidic residues. The segment at 1-60 (MKLHELKPAEGSRKQRNRVGRGIGSGNGKTAGKGHKGQNARSGGGVRPGFEGGQNPLFRR) is disordered. 2 stretches are compositionally biased toward gly residues: residues 21 to 31 (RGIGSGNGKTA) and 42 to 52 (SGGGVRPGFEG).

This sequence belongs to the universal ribosomal protein uL15 family. As to quaternary structure, part of the 50S ribosomal subunit.

Binds to the 23S rRNA. The sequence is that of Large ribosomal subunit protein uL15 from Lysinibacillus sphaericus (strain C3-41).